The primary structure comprises 118 residues: uncharacterized protein (118 aa).

The disordered stretch occupies residues 49-80 (SKEEHTTSAANLHPRKKKRMPPRRAEKNKAPN). Basic residues predominate over residues 61–70 (HPRKKKRMPP).

This is an uncharacterized protein from Saccharomyces cerevisiae (strain ATCC 204508 / S288c) (Baker's yeast).